Consider the following 213-residue polypeptide: MAANKSYKSYFLDPLWNNNQPLIAILGICSALAVTTTVNTALTMGLAVSFVTGCSSFFVSLLRKVTPDSVRMITQLIIISLFVIVIDQFLKAFFFDISKTLSVFVGLIITNCIVMGRAESLARNVPPIPAFLDGFASGLGYGWVLVTVSIIREFFGFGTILGLQLIPKCFYASEAHPDGYENFGLMVLAPSAFFLLGIMIWGVNILRSKKERR.

7 helical membrane passes run Pro-21–Ala-41, Leu-42–Leu-62, Ile-77–Ile-97, Leu-101–Leu-121, Phe-131–Ile-151, Glu-153–Ser-173, and Phe-183–Val-203.

It belongs to the NqrDE/RnfAE family. As to quaternary structure, composed of six subunits; NqrA, NqrB, NqrC, NqrD, NqrE and NqrF.

It is found in the cell inner membrane. The catalysed reaction is a ubiquinone + n Na(+)(in) + NADH + H(+) = a ubiquinol + n Na(+)(out) + NAD(+). NQR complex catalyzes the reduction of ubiquinone-1 to ubiquinol by two successive reactions, coupled with the transport of Na(+) ions from the cytoplasm to the periplasm. NqrA to NqrE are probably involved in the second step, the conversion of ubisemiquinone to ubiquinol. This Chlamydia abortus (strain DSM 27085 / S26/3) (Chlamydophila abortus) protein is Na(+)-translocating NADH-quinone reductase subunit D.